The primary structure comprises 339 residues: Undecaprenyl-phosphate 4-deoxy-4-formamido-L-arabinose transferase (339 aa).

2 consecutive transmembrane segments (helical) span residues 235–255 (LSII…MLIV) and 270–290 (FVLF…MGLL).

The protein belongs to the glycosyltransferase 2 family.

It localises to the cell inner membrane. The enzyme catalyses UDP-4-deoxy-4-formamido-beta-L-arabinose + di-trans,octa-cis-undecaprenyl phosphate = 4-deoxy-4-formamido-alpha-L-arabinopyranosyl di-trans,octa-cis-undecaprenyl phosphate + UDP. It functions in the pathway glycolipid biosynthesis; 4-amino-4-deoxy-alpha-L-arabinose undecaprenyl phosphate biosynthesis; 4-amino-4-deoxy-alpha-L-arabinose undecaprenyl phosphate from UDP-4-deoxy-4-formamido-beta-L-arabinose and undecaprenyl phosphate: step 1/2. It participates in bacterial outer membrane biogenesis; lipopolysaccharide biosynthesis. Its function is as follows. Catalyzes the transfer of 4-deoxy-4-formamido-L-arabinose from UDP to undecaprenyl phosphate. The modified arabinose is attached to lipid A and is required for resistance to polymyxin and cationic antimicrobial peptides. In Pseudomonas fluorescens (strain ATCC BAA-477 / NRRL B-23932 / Pf-5), this protein is Undecaprenyl-phosphate 4-deoxy-4-formamido-L-arabinose transferase.